The sequence spans 382 residues: Galactokinase (382 aa).

A substrate-binding site is contributed by 34-37 (EHTD). 124–130 (GAGLSSS) is a binding site for ATP. S130 and E162 together coordinate Mg(2+). D174 (proton acceptor) is an active-site residue. Y223 provides a ligand contact to substrate.

The protein belongs to the GHMP kinase family. GalK subfamily.

It localises to the cytoplasm. The enzyme catalyses alpha-D-galactose + ATP = alpha-D-galactose 1-phosphate + ADP + H(+). It participates in carbohydrate metabolism; galactose metabolism. Functionally, catalyzes the transfer of the gamma-phosphate of ATP to D-galactose to form alpha-D-galactose-1-phosphate (Gal-1-P). This is Galactokinase from Shigella boydii serotype 4 (strain Sb227).